A 185-amino-acid chain; its full sequence is dCTP deaminase (185 aa).

DCTP contacts are provided by residues 107–112, 131–133, glutamine 152, tyrosine 166, and glutamine 176; these read KSTYAR and TLE. Catalysis depends on glutamate 133, which acts as the Proton donor/acceptor.

The protein belongs to the dCTP deaminase family. As to quaternary structure, homotrimer.

It catalyses the reaction dCTP + H2O + H(+) = dUTP + NH4(+). The protein operates within pyrimidine metabolism; dUMP biosynthesis; dUMP from dCTP (dUTP route): step 1/2. Functionally, catalyzes the deamination of dCTP to dUTP. In Neorickettsia sennetsu (strain ATCC VR-367 / Miyayama) (Ehrlichia sennetsu), this protein is dCTP deaminase.